Consider the following 140-residue polypeptide: Nucleoside diphosphate kinase (140 aa).

Residues Lys11, Phe59, Arg87, Thr93, Arg104, and Asn114 each coordinate ATP. Catalysis depends on His117, which acts as the Pros-phosphohistidine intermediate.

Belongs to the NDK family. Homotetramer. It depends on Mg(2+) as a cofactor.

It is found in the cytoplasm. It catalyses the reaction a 2'-deoxyribonucleoside 5'-diphosphate + ATP = a 2'-deoxyribonucleoside 5'-triphosphate + ADP. The catalysed reaction is a ribonucleoside 5'-diphosphate + ATP = a ribonucleoside 5'-triphosphate + ADP. In terms of biological role, major role in the synthesis of nucleoside triphosphates other than ATP. The ATP gamma phosphate is transferred to the NDP beta phosphate via a ping-pong mechanism, using a phosphorylated active-site intermediate. In Rhizobium johnstonii (strain DSM 114642 / LMG 32736 / 3841) (Rhizobium leguminosarum bv. viciae), this protein is Nucleoside diphosphate kinase.